The sequence spans 1851 residues: Voltage-dependent calcium channel type A subunit alpha-1 (1851 aa).

Residues 1–38 (MGGPKKEENPPGGGPTSLFILTEDNPIRKYTRFIIEWP) are Cytoplasmic-facing. Residues 25 to 316 (NPIRKYTRFI…LVLGVLSGEF (292 aa)) form an I repeat. A helical membrane pass occupies residues 39–57 (PFEYAVLLTIIANCVVLAL). Residues 58-75 (EEHLPGGDKTVLAQKLEK) are Extracellular-facing. The chain crosses the membrane as a helical span at residues 76-95 (TEAYFLCIFCVEASLKILAL). Over 96 to 107 (GLVLHKHSYLRN) the chain is Cytoplasmic. Residues 108 to 128 (IWNIMDFFVVVTGFMTQYPQI) traverse the membrane as a helical segment. At 129–133 (GPEVD) the chain is on the extracellular side. Residues 134 to 152 (LRTLRAIRVLRPLKLVSGI) traverse the membrane as a helical segment. The Cytoplasmic portion of the chain corresponds to 153-171 (PSLQVVLKSIIKAMAPLLQ). A helical membrane pass occupies residues 172-191 (IGLLVLFAIVIFAIIGLEFY). At 192-288 (SGALHKTCYS…WTNDALGSAF (97 aa)) the chain is on the extracellular side. N-linked (GlcNAc...) asparagine glycosylation is found at asparagine 234 and asparagine 235. Residues 289–313 (NWIYFVPLIVIGSFFMLNLVLGVLS) form a helical membrane-spanning segment. Residues 314–441 (GEFSNERNRV…FWIRHTVKTQ (128 aa)) lie on the Cytoplasmic side of the membrane. The segment at 381-417 (RKKLKSLGKSKSTDTEEEEAEEDYGDDGYLKTRSKPQ) is disordered. Positions 395 to 406 (TEEEEAEEDYGD) are enriched in acidic residues. One copy of the II repeat lies at 427-670 (EKRFRFWIRH…VFLAIAVDNL (244 aa)). The helical transmembrane segment at 442–460 (WFYWFVIVLVFLNTVCVAV) threads the bilayer. Residues 461–475 (EHYGQPSFLTEFLYY) lie on the Extracellular side of the membrane. The helical transmembrane segment at 476–495 (AEFIFLGLFMSEMFIKMYAL) threads the bilayer. Residues 496 to 503 (GPRIYFES) lie on the Cytoplasmic side of the membrane. The chain crosses the membrane as a helical span at residues 504–522 (SFNRFDCVVISGSIFEVIW). Residues 523–531 (SEVKGGSFG) lie on the Extracellular side of the membrane. Residues 532 to 550 (LSVLRALRLLRIFKVTKYW) traverse the membrane as a helical segment. Residues 551-569 (SSLRNLVISLLNSMRSIIS) lie on the Cytoplasmic side of the membrane. A helical membrane pass occupies residues 570 to 589 (LLFLLFLFILIFALLGMQLF). At 590-642 (GGQFNLPGGTPETNFNTFPIALLTVFQILTGEDWNEVMYQGIISQGGAQKGMI) the chain is on the extracellular side. A helical transmembrane segment spans residues 643-667 (YSIYFIVLVLFGNYTLLNVFLAIAV). Topologically, residues 668–767 (DNLANAQELT…IRRGAHWVVN (100 aa)) are cytoplasmic. The disordered stretch occupies residues 710–741 (ENGDGAVAPSKSKGKKKEEEKKEEEEVTEGPK). The stretch at 762–1049 (AHWVVNLPYF…IITFQEQGEA (288 aa)) is one III repeat. A helical transmembrane segment spans residues 768–786 (LPYFDFFIMVVISMSSIAL). The Extracellular portion of the chain corresponds to 787 to 802 (AAEDPVRENSRRNKIL). The chain crosses the membrane as a helical span at residues 803 to 822 (NYFDYAFTGVFTIEMLLKIV). Residues 823-834 (DLGVILHPGSYL) lie on the Cytoplasmic side of the membrane. Residues 835-853 (REFWNIMDAVVVICAAVSF) traverse the membrane as a helical segment. Residues 854–866 (GFDMSGSSAGQNL) lie on the Extracellular side of the membrane. Asparagine 865 carries an N-linked (GlcNAc...) asparagine glycan. The chain crosses the membrane as a helical span at residues 867–885 (STIKSLRVLRVLRPLKTIK). The Cytoplasmic segment spans residues 886–904 (RVPKLKAVFDCVVNSLKNV). The chain crosses the membrane as a helical span at residues 905–924 (VNILIVYILFQFIFSVIGVQ). The Extracellular portion of the chain corresponds to 925–1013 (LFNGKFFYCT…EDRGPIQNFR (89 aa)). The chain crosses the membrane as a helical span at residues 1014–1038 (IEMSIFYIVYFIVFPFFFVNIFVAL). The Cytoplasmic segment spans residues 1039-1093 (IIITFQEQGEAELQDGEIDKNQKSCIDFTIGARPLERYMPKNRNTFKYKVWRIVV). The stretch at 1086-1347 (YKVWRIVVST…DNFDYLTRDS (262 aa)) is one IV repeat. The chain crosses the membrane as a helical span at residues 1094–1122 (STPFEYFIMMLIVFNTLLLMMKYHNQGDM). Topologically, residues 1123–1127 (YEKSL) are extracellular. Residues 1128-1147 (KYINMGFTGMFSVETVLKII) form a helical membrane-spanning segment. Over 1148-1155 (GFGVKNFF) the chain is Cytoplasmic. Residues 1156 to 1174 (KDPWNIFDLITVLGSIVDA) traverse the membrane as a helical segment. Residues 1175–1184 (LWMEFGHDDS) lie on the Extracellular side of the membrane. Residues 1185 to 1203 (NSINVGFLRLFRAARLIKL) traverse the membrane as a helical segment. Residues 1204-1222 (LRQGYTIRILLWTFVQSFK) lie on the Cytoplasmic side of the membrane. Residues 1223–1242 (ALPYVCLLIAMLFFIYAIIG) form a helical membrane-spanning segment. The Extracellular portion of the chain corresponds to 1243 to 1308 (MQVFGNIKLG…DAEKAPGEYC (66 aa)). Residues 1306–1348 (EYCGSTLAYAYFVSFIFFCSFLMLNLFVAVIMDNFDYLTRDSS) form a phenylalkylamine binding region. The helical transmembrane segment at 1309-1333 (GSTLAYAYFVSFIFFCSFLMLNLFV) threads the bilayer. Over 1334-1851 (AVIMDNFDYL…HSDSDEEDWC (518 aa)) the chain is Cytoplasmic. One can recognise an EF-hand domain in the interval 1353–1388 (HHLDEFVRIWAEYDPNATGKIHYTEMYDMLKNMDPP). Positions 1366, 1368, 1370, 1372, and 1377 each coordinate Ca(2+). 4 disordered regions span residues 1513–1572 (DASR…HHDI), 1588–1653 (TRHP…SPAR), 1685–1764 (RAGI…DRDR), and 1823–1851 (VLPS…EDWC). A compositionally biased stretch (basic residues) spans 1589 to 1600 (RHPRHGNSHPRY). Positions 1604-1619 (SWSASTSPARSPSPSR) are enriched in low complexity. Composition is skewed to polar residues over residues 1637–1649 (YGTT…SRSP) and 1698–1710 (KPST…TNIN). The segment covering 1734–1764 (HHRDLLRDPRDMYYSSRERERDRERLRDRDR) has biased composition (basic and acidic residues).

The protein belongs to the calcium channel alpha-1 subunit (TC 1.A.1.11) family. Expressed widely in the embryonic nervous system.

Its subcellular location is the membrane. Voltage-sensitive calcium channels (VSCC) mediate the entry of calcium ions into excitable cells and are also involved in a variety of calcium-dependent processes, including muscle contraction, neurotransmitter release, gene expression, cell motility, cell division and cell death. Probably encodes a dihydropyridine-insensitive current. Vital for survival to adulthood. The protein is Voltage-dependent calcium channel type A subunit alpha-1 (cac) of Drosophila melanogaster (Fruit fly).